Here is a 274-residue protein sequence, read N- to C-terminus: Long chain fatty acid elongase 2 (274 aa).

A run of 7 helical transmembrane segments spans residues 29–49 (MSTFVPLSYKIMIGYLVTIYF), 73–93 (FSLFSGIAAYKLIPELFGVFM), 115–135 (FWGWAFVMSKAPELGDTMFLV), 140–160 (PVIFMHWYHHALTFVYAVVTY), 170–190 (SLALNLAVHTVMYFYFAVRAL), 201–221 (FITTIQIVQFVISCYIFGHLV), and 238–258 (VLSIGGLMYISYLFLFAKFFY).

The protein belongs to the ELO family. Expressed in various tissues and parts of the body, including the ventral cord, pharyngeal muscles, uterus, and the tail, and most strongly in intestinal cells.

Its subcellular location is the membrane. The enzyme catalyses hexadecanoyl-CoA + malonyl-CoA + H(+) = 3-oxooctadecanoyl-CoA + CO2 + CoA. It participates in lipid metabolism; fatty acid biosynthesis. Catalyzes the first and rate-limiting reaction of the four reactions that constitute the long-chain fatty acids elongation cycle. Uses malonyl-CoA to add 2 carbons per cycle to the chain of long-chain fatty acids. Condensing enzyme responsible for the elongation of palmitate (hexadecanoate, 16:0), also involved in polyunsaturated fatty acid (PUFA) biosynthesis. The protein is Long chain fatty acid elongase 2 of Caenorhabditis elegans.